Here is a 61-residue protein sequence, read N- to C-terminus: Potassium channel toxin alpha-KTx 6.9 (61 aa).

An N-terminal signal peptide occupies residues 1–23 (MNAKFILLLLVVTTTTLLPDAKG). 4 disulfide bridges follow: Cys29–Cys50, Cys35–Cys55, Cys39–Cys57, and Cys45–Cys60.

This sequence belongs to the short scorpion toxin superfamily. Potassium channel inhibitor family. Alpha-KTx 06 subfamily. Expressed by the venom gland.

The protein localises to the secreted. Functionally, inhibits Kv1.2/KCNA2 and Kv1.3/KCNA3 voltage-gated potassium channels. The chain is Potassium channel toxin alpha-KTx 6.9 from Opistophthalmus carinatus (African yellow leg scorpion).